The chain runs to 190 residues: Peptidyl-tRNA hydrolase (190 aa).

TRNA is bound at residue Phe-14. The active-site Proton acceptor is His-19. TRNA is bound by residues Met-64, Asn-66, and Asn-112.

The protein belongs to the PTH family. Monomer.

Its subcellular location is the cytoplasm. It carries out the reaction an N-acyl-L-alpha-aminoacyl-tRNA + H2O = an N-acyl-L-amino acid + a tRNA + H(+). In terms of biological role, hydrolyzes ribosome-free peptidyl-tRNAs (with 1 or more amino acids incorporated), which drop off the ribosome during protein synthesis, or as a result of ribosome stalling. Functionally, catalyzes the release of premature peptidyl moieties from peptidyl-tRNA molecules trapped in stalled 50S ribosomal subunits, and thus maintains levels of free tRNAs and 50S ribosomes. This is Peptidyl-tRNA hydrolase from Staphylococcus aureus (strain bovine RF122 / ET3-1).